A 103-amino-acid chain; its full sequence is MAAVSLSVSTVKPLGDRVFIKVSESEEKTAGGILLPDTAKEKPQVGEVVQVGPGKRNDDGSRQAPEVGVGDKVLYSKYAGTDIKLGGDEFVLLTEKDILAIVN.

This sequence belongs to the GroES chaperonin family. As to quaternary structure, heptamer of 7 subunits arranged in a ring. Interacts with the chaperonin GroEL.

The protein localises to the cytoplasm. Functionally, together with the chaperonin GroEL, plays an essential role in assisting protein folding. The GroEL-GroES system forms a nano-cage that allows encapsulation of the non-native substrate proteins and provides a physical environment optimized to promote and accelerate protein folding. GroES binds to the apical surface of the GroEL ring, thereby capping the opening of the GroEL channel. The sequence is that of Co-chaperonin GroES from Parasynechococcus marenigrum (strain WH8102).